The following is a 152-amino-acid chain: 6,7-dimethyl-8-ribityllumazine synthase (152 aa).

5-amino-6-(D-ribitylamino)uracil-binding positions include Phe24, 56–58, and 80–82; these read SFE and VVV. 85–86 is a binding site for (2S)-2-hydroxy-3-oxobutyl phosphate; sequence ET. The active-site Proton donor is His88. Residue Phe113 participates in 5-amino-6-(D-ribitylamino)uracil binding. Arg127 contributes to the (2S)-2-hydroxy-3-oxobutyl phosphate binding site.

It belongs to the DMRL synthase family.

The enzyme catalyses (2S)-2-hydroxy-3-oxobutyl phosphate + 5-amino-6-(D-ribitylamino)uracil = 6,7-dimethyl-8-(1-D-ribityl)lumazine + phosphate + 2 H2O + H(+). It functions in the pathway cofactor biosynthesis; riboflavin biosynthesis; riboflavin from 2-hydroxy-3-oxobutyl phosphate and 5-amino-6-(D-ribitylamino)uracil: step 1/2. In terms of biological role, catalyzes the formation of 6,7-dimethyl-8-ribityllumazine by condensation of 5-amino-6-(D-ribitylamino)uracil with 3,4-dihydroxy-2-butanone 4-phosphate. This is the penultimate step in the biosynthesis of riboflavin. The sequence is that of 6,7-dimethyl-8-ribityllumazine synthase from Thermococcus onnurineus (strain NA1).